A 137-amino-acid chain; its full sequence is Large-conductance mechanosensitive channel (137 aa).

The next 2 membrane-spanning stretches (helical) occupy residues 14 to 34 (VLDLAVGVIIGAAFTAIINSL) and 81 to 101 (GSFLNAVINFLLVAFVIFLIV).

Belongs to the MscL family. As to quaternary structure, homopentamer.

It is found in the cell membrane. Channel that opens in response to stretch forces in the membrane lipid bilayer. May participate in the regulation of osmotic pressure changes within the cell. The chain is Large-conductance mechanosensitive channel from Chloroflexus aggregans (strain MD-66 / DSM 9485).